The sequence spans 520 residues: Eukaryotic translation initiation factor 3 subunit L (520 aa).

The PCI domain maps to 278-478 (FATYYYVGIC…ELDIALENDL (201 aa)).

This sequence belongs to the eIF-3 subunit L family. In terms of assembly, component of the eukaryotic translation initiation factor 3 (eIF-3) complex.

The protein resides in the cytoplasm. Functionally, component of the eukaryotic translation initiation factor 3 (eIF-3) complex, which is involved in protein synthesis of a specialized repertoire of mRNAs and, together with other initiation factors, stimulates binding of mRNA and methionyl-tRNAi to the 40S ribosome. The eIF-3 complex specifically targets and initiates translation of a subset of mRNAs involved in cell proliferation. This chain is Eukaryotic translation initiation factor 3 subunit L, found in Yarrowia lipolytica (strain CLIB 122 / E 150) (Yeast).